We begin with the raw amino-acid sequence, 193 residues long: Sarcoplasmic calcium-binding protein (193 aa).

EF-hand domains follow at residues 16–40 (MYDIDNNGYLDKNDFECLALRNTLI), 57–92 (IMSNLWNEIAELADFNKDGQVTVDEFKQAVQNLCCG), and 101–136 (CFKTVIGRLFKTIDINGDGLAGVDEYRLDCISRSAF). 14 residues coordinate Ca(2+): D18, D20, N22, Y24, D29, D70, N72, D74, Q76, E81, D114, N116, D118, and E125.

In terms of assembly, monomer and dimer. In terms of tissue distribution, skeletal muscle (at protein level).

Its function is as follows. Like parvalbumins, SCPs seem to be more abundant in fast contracting muscles, but no functional relationship can be established from this distribution. The chain is Sarcoplasmic calcium-binding protein from Scylla paramamosain (Mud crab).